A 716-amino-acid polypeptide reads, in one-letter code: Cyclic nucleotide-gated ion channel 1 (716 aa).

At 1–97 (MNFRQEKFVR…QGPFLQRWNK (97 aa)) the chain is on the cytoplasmic side. Residues 98–118 (IFVLACIIAVSLDPLFFYVPI) traverse the membrane as a helical segment. Topologically, residues 119–132 (IDDAKKCLGIDKKM) are extracellular. A helical membrane pass occupies residues 133-153 (EITASVLRSFTDVFYVLHIIF). At 154-187 (QFRTGFIAPSSRVFGRGVLVEDKREIAKRYLSSH) the chain is on the cytoplasmic side. The helical transmembrane segment at 188–208 (FIIDILAVLPLPQMVILIIIP) threads the bilayer. The Extracellular portion of the chain corresponds to 209–220 (HMRGSSSLNTKN). The chain crosses the membrane as a helical span at residues 221–241 (MLKFIVFFQYIPRFIRIYPLY). Topologically, residues 242–259 (KEVTRTSGILTETAWAGA) are cytoplasmic. The chain crosses the membrane as a helical span at residues 260-280 (AFNLFLYMLASHVFGAFWYLF). At 281–379 (SIERETVCWK…GQNLKTSTYI (99 aa)) the chain is on the extracellular side. The helical transmembrane segment at 380–400 (WEICFAVFISIAGLVLFSFLI) threads the bilayer. The Cytoplasmic segment spans residues 401-716 (GNMQTYLQST…PAEPDFNSDD (316 aa)). A nucleoside 3',5'-cyclic phosphate contacts are provided by residues 486–610 (MFEK…SKQL) and Glu-557. Residues 602 to 617 (FRRLHSKQLRHTFRYY) are calmodulin-binding. One can recognise an IQ domain in the interval 622–651 (KTWAACFIQAAWRRYIKKKLEESLKEEENR). Residues 689 to 716 (SVRKPRMPERMPPMLLQKPAEPDFNSDD) form a disordered region.

Belongs to the cyclic nucleotide-gated cation channel (TC 1.A.1.5) family. As to quaternary structure, homotetramer or heterotetramer (Potential). Binds calmodulin-2/3/5 with a higher affinity than calmodulin-1/4. In terms of tissue distribution, expressed in the whole plant but only weakly in roots.

It is found in the cell membrane. Acts as a cyclic nucleotide-gated ion channel. Can be activated by cyclic AMP which leads to an opening of the cation channel. May be responsible for cAMP-induced calcium entry in cells and thus should be involved in the calcium signal transduction. Could transport K(+), Na(+) and Pb(2+). This chain is Cyclic nucleotide-gated ion channel 1 (CNGC1), found in Arabidopsis thaliana (Mouse-ear cress).